Consider the following 77-residue polypeptide: Acyl carrier protein (77 aa).

The 76-residue stretch at 2–77 (STVEERVKKI…DAIDYILANQ (76 aa)) folds into the Carrier domain. Ser-37 bears the O-(pantetheine 4'-phosphoryl)serine mark.

This sequence belongs to the acyl carrier protein (ACP) family. Post-translationally, 4'-phosphopantetheine is transferred from CoA to a specific serine of apo-ACP by AcpS. This modification is essential for activity because fatty acids are bound in thioester linkage to the sulfhydryl of the prosthetic group.

The protein resides in the cytoplasm. The protein operates within lipid metabolism; fatty acid biosynthesis. In terms of biological role, carrier of the growing fatty acid chain in fatty acid biosynthesis. This chain is Acyl carrier protein, found in Hahella chejuensis (strain KCTC 2396).